The following is a 472-amino-acid chain: Cysteine--tRNA ligase (472 aa).

Residue Cys-29 coordinates Zn(2+). The 'HIGH' region signature appears at 31-41; it reads PTVYNYIHIGN. Residues Cys-214, His-239, and Glu-243 each coordinate Zn(2+). Positions 273–277 match the 'KMSKS' region motif; it reads KMSKS. Lys-276 is a binding site for ATP.

This sequence belongs to the class-I aminoacyl-tRNA synthetase family. As to quaternary structure, monomer. It depends on Zn(2+) as a cofactor.

It is found in the cytoplasm. The enzyme catalyses tRNA(Cys) + L-cysteine + ATP = L-cysteinyl-tRNA(Cys) + AMP + diphosphate. This is Cysteine--tRNA ligase from Lactobacillus gasseri (strain ATCC 33323 / DSM 20243 / BCRC 14619 / CIP 102991 / JCM 1131 / KCTC 3163 / NCIMB 11718 / NCTC 13722 / AM63).